The primary structure comprises 408 residues: MINALKGMKDLLDKDAYYYEKVIKTCEEVAKNYGFTFINTPHLELCTLFKRSVGESSDIVGKEMYEFIDKGENHVCMRPEGTAGVVRAYIEKKLDKNTSVKRWFYHGSMFRYERPQKGRLREFHQFGVESFGNASVYEDASIILMLVEIFSRLDIKFKLLINSLGCLKCMPKYRENLIHFLDSKEGFCEDCLRRKNLNPIRVLDCKNEHCQSLLNDAPLLNQNLCSSCQKDFEILQSVLKENGVDFEVDSKLVRGLDYYSKTAFEFISDEIGAKAAIAGGGRYDRLIEYLDGKSGFGVGFAMGIERIIAILEQKEEKVQREGIYLCAMDEIYIQKLLHIATNLRKEHKVLLSYEARKLAKHLENADKNNAEIFLCMGENEAQNESLFYKNLVKKEEKMIKISDLKKVL.

The protein belongs to the class-II aminoacyl-tRNA synthetase family. Homodimer.

The protein resides in the cytoplasm. It carries out the reaction tRNA(His) + L-histidine + ATP = L-histidyl-tRNA(His) + AMP + diphosphate + H(+). The chain is Histidine--tRNA ligase from Campylobacter jejuni subsp. jejuni serotype O:6 (strain 81116 / NCTC 11828).